The sequence spans 119 residues: Protein TusC (119 aa).

Belongs to the DsrF/TusC family. Heterohexamer, formed by a dimer of trimers. The hexameric TusBCD complex contains 2 copies each of TusB, TusC and TusD. The TusBCD complex interacts with TusE.

It localises to the cytoplasm. Its function is as follows. Part of a sulfur-relay system required for 2-thiolation of 5-methylaminomethyl-2-thiouridine (mnm(5)s(2)U) at tRNA wobble positions. The protein is Protein TusC of Photorhabdus laumondii subsp. laumondii (strain DSM 15139 / CIP 105565 / TT01) (Photorhabdus luminescens subsp. laumondii).